The primary structure comprises 742 residues: ATP-dependent RNA helicase DBP7 (742 aa).

Residues 45–100 (GKTVSRKRKANTTGDEGIIPGRGENSIKKLHKESSYSSEEQEKYKGRNAHNTQGRT) form a disordered region. Residues 143 to 172 (DQFASLGVTSLLVSHLEQKMRIKKPTSIQK) carry the Q motif motif. Residues 178–372 (IIGNAGKNDF…NVALKDYKLI (195 aa)) enclose the Helicase ATP-binding domain. 191-198 (AQTGSGKT) contacts ATP. Residues 307–310 (DEGD) carry the DEAD box motif. The Helicase C-terminal domain occupies 405-605 (TLAATLNNIT…ILMPAFKDVN (201 aa)). The disordered stretch occupies residues 701-726 (AMGLQSSKDGNSEKKPTKENSKNKMF). The span at 710–722 (GNSEKKPTKENSK) shows a compositional bias: basic and acidic residues.

It belongs to the DEAD box helicase family. DDX31/DBP7 subfamily.

Its subcellular location is the nucleus. The protein localises to the nucleolus. The enzyme catalyses ATP + H2O = ADP + phosphate + H(+). Functionally, ATP-binding RNA helicase involved in the biogenesis of 60S ribosomal subunits and is required for the normal formation of 25S and 5.8S rRNAs. This is ATP-dependent RNA helicase DBP7 (DBP7) from Saccharomyces cerevisiae (strain YJM789) (Baker's yeast).